Here is an 874-residue protein sequence, read N- to C-terminus: Alanine--tRNA ligase (874 aa).

Zn(2+) contacts are provided by His-562, His-566, Cys-664, and His-668.

It belongs to the class-II aminoacyl-tRNA synthetase family. It depends on Zn(2+) as a cofactor.

The protein localises to the cytoplasm. The enzyme catalyses tRNA(Ala) + L-alanine + ATP = L-alanyl-tRNA(Ala) + AMP + diphosphate. Its function is as follows. Catalyzes the attachment of alanine to tRNA(Ala) in a two-step reaction: alanine is first activated by ATP to form Ala-AMP and then transferred to the acceptor end of tRNA(Ala). Also edits incorrectly charged Ser-tRNA(Ala) and Gly-tRNA(Ala) via its editing domain. The chain is Alanine--tRNA ligase from Shewanella sp. (strain MR-7).